The sequence spans 479 residues: Probable periplasmic serine endoprotease DegP-like (479 aa).

Positions Met-1 to Ala-27 are cleaved as a signal peptide. Residues His-117, Asp-147, and Ser-220 each act as charge relay system in the active site. Substrate is bound by residues Gly-218–Ser-220 and Leu-275–Ile-279. 2 PDZ domains span residues Leu-264–Gly-355 and Asp-361–Gly-468. The disordered stretch occupies residues Pro-368 to Val-395.

It belongs to the peptidase S1C family.

Its subcellular location is the periplasm. The catalysed reaction is Acts on substrates that are at least partially unfolded. The cleavage site P1 residue is normally between a pair of hydrophobic residues, such as Val-|-Val.. Its function is as follows. Might be efficient in the degradation of transiently denatured and unfolded proteins which accumulate in the periplasm following stress conditions. The sequence is that of Probable periplasmic serine endoprotease DegP-like from Pseudomonas putida (strain W619).